The following is a 102-amino-acid chain: Monothiol glutaredoxin-S8 (102 aa).

Positions 1-101 constitute a Glutaredoxin domain; the sequence is MEKIQKMISE…PMLKRFGALW (101 aa). Cysteine 21 is a binding site for [2Fe-2S] cluster. A Responsive for interaction with TGA factors motif is present at residues 99–102; the sequence is ALWL.

The protein belongs to the glutaredoxin family. CC-type subfamily.

The protein localises to the cytoplasm. Its subcellular location is the nucleus. Functionally, may only reduce GSH-thiol disulfides, but not protein disulfides. This chain is Monothiol glutaredoxin-S8 (GRXS8), found in Arabidopsis thaliana (Mouse-ear cress).